We begin with the raw amino-acid sequence, 204 residues long: Allatotropin (204 aa).

The N-terminal stretch at 1–20 (MNLTMQLAVIVAVCLCLAEG) is a signal peptide. Residues 21–35 (APDVRLTRTKQQRPT) constitute a propeptide that is removed on maturation. Residues 47-83 (RGFGKRDRPHPRAERDVDHQAPSARPNRGTPTFKSPT) form a disordered region. Position 49 is a phenylalanine amide (F49). Residues 50–65 (GKRDRPHPRAERDVDH) are compositionally biased toward basic and acidic residues. Positions 53 to 204 (DRPHPRAERD…LSSEELLRNF (152 aa)) are excised as a propeptide.

As to expression, expressed extensively in the brain, frontal ganglion and terminal ganglion of the day 2 fifth instar larva (at protein level). Not expressed in the larval brain after day 4 of the fifth instar, or in the brain of the pupa or adult. Expression in the terminal ganglion is localized to cells in the posterior portion of the seventh neuromere of day 2 fifth instar larvae. In the pupa and adult expression is detected in the medial region of neuromere 6, the dorsal medial region of neuromere 7, and the posterior neuromere of the terminal ganglion (at protein level). In the frontal ganglion expression decreases in the wandering larvae and is present at low levels in during pupal ecdysis, but is not detected in the adult. Expressed in the subesophageal ganglion of day 2 fifth instar larva, but not at any time before or after day 2. Not expressed in the abdominal ganglia 1-6 of the day 2 fifth instar larva (at protein level). Expressed in the anterior neuromeres of the pterothoracic ganglion in pupa but not in adult (at protein level). Expressed in the unfused abdominal ganglia of day 10 pupae, and in pharate adult is expressed in median neurosecretory cells M1, M2 and M5, but not in median neurosecretory cells M3 and M4 (at protein level). Not expressed in the differentiated median neurosecretory cells M5 of the larva (at protein level). In the pharate adult brain isoform 3 is the predominant form, with lower levels of isoform 2 and very low levels of isoform 1 detected. In the pharate adult nerve cord isoform 3 is the predominant form, with lower levels of isoform 2 and no isoform 1 detected. In the pharate adult frontal ganglion isoform 3 is expressed, but not isoform 1 and isoform 2.

Its subcellular location is the secreted. In terms of biological role, neuropeptide stimulator of juvenile hormone synthesis. Cardioregulatory neurohormone that increases heart beat rate in the adult but not in the larva. Inhibits active ion transport in the midgut of feeding fourth instar and day 2 fifth instar larva, but not in the midgut of pharate or wandering fifth instar larva. The polypeptide is Allatotropin (Manduca sexta (Tobacco hawkmoth)).